The chain runs to 119 residues: Protein GSKIP homolog (119 aa).

Belongs to the GSKIP family.

This is Protein GSKIP homolog from Drosophila melanogaster (Fruit fly).